The primary structure comprises 862 residues: Leucine--tRNA ligase (862 aa).

The 'HIGH' region motif lies at 42–52; the sequence is PYPSGRLHMGH. The short motif at 622-626 is the 'KMSKS' region element; it reads KMSKS. Lysine 625 is a binding site for ATP.

Belongs to the class-I aminoacyl-tRNA synthetase family.

It localises to the cytoplasm. It catalyses the reaction tRNA(Leu) + L-leucine + ATP = L-leucyl-tRNA(Leu) + AMP + diphosphate. The protein is Leucine--tRNA ligase of Vibrio campbellii (strain ATCC BAA-1116).